The sequence spans 159 residues: Transcriptional repressor NrdR (159 aa).

A zinc finger spans residues 3 to 34; it reads CPFCRHDDTQVVDSRVSEDGAAIRRRRRCSAC. In terms of domain architecture, ATP-cone spans 49–139; that stretch reads PAVVKKDGSR…VYRRFEDVSE (91 aa).

Belongs to the NrdR family. Zn(2+) is required as a cofactor.

Functionally, negatively regulates transcription of bacterial ribonucleotide reductase nrd genes and operons by binding to NrdR-boxes. This Burkholderia thailandensis (strain ATCC 700388 / DSM 13276 / CCUG 48851 / CIP 106301 / E264) protein is Transcriptional repressor NrdR.